The primary structure comprises 315 residues: Aspartate carbamoyltransferase catalytic subunit (315 aa).

Positions 61 and 62 each coordinate carbamoyl phosphate. Lys90 provides a ligand contact to L-aspartate. The carbamoyl phosphate site is built by Arg111, His139, and Gln142. L-aspartate-binding residues include Arg172 and Arg234. 2 residues coordinate carbamoyl phosphate: Leu274 and Pro275.

Belongs to the aspartate/ornithine carbamoyltransferase superfamily. ATCase family. As to quaternary structure, heterooligomer of catalytic and regulatory chains.

The enzyme catalyses carbamoyl phosphate + L-aspartate = N-carbamoyl-L-aspartate + phosphate + H(+). It participates in pyrimidine metabolism; UMP biosynthesis via de novo pathway; (S)-dihydroorotate from bicarbonate: step 2/3. In terms of biological role, catalyzes the condensation of carbamoyl phosphate and aspartate to form carbamoyl aspartate and inorganic phosphate, the committed step in the de novo pyrimidine nucleotide biosynthesis pathway. The polypeptide is Aspartate carbamoyltransferase catalytic subunit (Hyperthermus butylicus (strain DSM 5456 / JCM 9403 / PLM1-5)).